Here is a 509-residue protein sequence, read N- to C-terminus: ESX-2 secretion system protein eccD2 (509 aa).

Transmembrane regions (helical) follow at residues 135–155 (LTAA…VLAL), 170–190 (AMAG…WWGW), 196–216 (LFSG…ACAP), 222–242 (AAHA…IGVA), 248–268 (QTAV…VAAV), 281–301 (ICVL…ALWV), 364–384 (VQVG…WGVL), 389–409 (PWAW…ITQG), 418–438 (AVAL…KYAL), 449–469 (LWPA…ALVV), and 487–507 (VLAM…FAWL).

It belongs to the EccD/Snm4 family. As to quaternary structure, part of the ESX-2 / type VII secretion system (T7SS), which is composed of cytosolic and membrane components.

The protein localises to the cell membrane. The protein is ESX-2 secretion system protein eccD2 (eccD2) of Mycobacterium tuberculosis (strain CDC 1551 / Oshkosh).